The chain runs to 375 residues: Alcohol dehydrogenase 1 (375 aa).

A1 is subject to N-acetylalanine. Zn(2+) is bound by residues C46, H68, C98, C101, C104, C112, and C175. Residues G200–G205, D224, K229, V293–L295, and R370 contribute to the NAD(+) site.

Belongs to the zinc-containing alcohol dehydrogenase family. Class-I subfamily. Requires Zn(2+) as cofactor.

Its subcellular location is the cytoplasm. The enzyme catalyses a primary alcohol + NAD(+) = an aldehyde + NADH + H(+). The catalysed reaction is a secondary alcohol + NAD(+) = a ketone + NADH + H(+). This is Alcohol dehydrogenase 1 from Pelophylax perezi (Perez's frog).